A 170-amino-acid chain; its full sequence is Large ribosomal subunit protein uL22z (170 aa).

This sequence belongs to the universal ribosomal protein uL22 family.

This chain is Large ribosomal subunit protein uL22z, found in Hordeum vulgare (Barley).